The chain runs to 216 residues: Adenylate kinase (216 aa).

Residue glycine 10–threonine 15 coordinates ATP. The segment at serine 30–isoleucine 59 is NMP. AMP contacts are provided by residues threonine 31, arginine 36, glycine 57–isoleucine 59, glycine 85–arginine 88, and glutamine 92. The LID stretch occupies residues glycine 122 to aspartate 159. ATP contacts are provided by residues arginine 123 and threonine 132–tyrosine 133. Residues arginine 156 and arginine 167 each coordinate AMP. Glycine 202 lines the ATP pocket.

The protein belongs to the adenylate kinase family. Monomer.

The protein resides in the cytoplasm. It carries out the reaction AMP + ATP = 2 ADP. It participates in purine metabolism; AMP biosynthesis via salvage pathway; AMP from ADP: step 1/1. In terms of biological role, catalyzes the reversible transfer of the terminal phosphate group between ATP and AMP. Plays an important role in cellular energy homeostasis and in adenine nucleotide metabolism. In Ruthia magnifica subsp. Calyptogena magnifica, this protein is Adenylate kinase.